The following is a 429-amino-acid chain: Serine--tRNA ligase (429 aa).

235 to 237 (TAE) contributes to the L-serine binding site. ATP is bound at residue 266–268 (RSE). Glu289 is an L-serine binding site. An ATP-binding site is contributed by 353–356 (EISS). Ser389 serves as a coordination point for L-serine.

The protein belongs to the class-II aminoacyl-tRNA synthetase family. Type-1 seryl-tRNA synthetase subfamily. As to quaternary structure, homodimer. The tRNA molecule binds across the dimer.

Its subcellular location is the cytoplasm. The catalysed reaction is tRNA(Ser) + L-serine + ATP = L-seryl-tRNA(Ser) + AMP + diphosphate + H(+). It carries out the reaction tRNA(Sec) + L-serine + ATP = L-seryl-tRNA(Sec) + AMP + diphosphate + H(+). Its pathway is aminoacyl-tRNA biosynthesis; selenocysteinyl-tRNA(Sec) biosynthesis; L-seryl-tRNA(Sec) from L-serine and tRNA(Sec): step 1/1. In terms of biological role, catalyzes the attachment of serine to tRNA(Ser). Is also able to aminoacylate tRNA(Sec) with serine, to form the misacylated tRNA L-seryl-tRNA(Sec), which will be further converted into selenocysteinyl-tRNA(Sec). The sequence is that of Serine--tRNA ligase from Histophilus somni (strain 2336) (Haemophilus somnus).